Reading from the N-terminus, the 425-residue chain is Histidine--tRNA ligase (425 aa).

This sequence belongs to the class-II aminoacyl-tRNA synthetase family. Homodimer.

Its subcellular location is the cytoplasm. The enzyme catalyses tRNA(His) + L-histidine + ATP = L-histidyl-tRNA(His) + AMP + diphosphate + H(+). In Listeria monocytogenes serovar 1/2a (strain ATCC BAA-679 / EGD-e), this protein is Histidine--tRNA ligase.